Here is an 83-residue protein sequence, read N- to C-terminus: uncharacterized protein (83 aa).

2 helical membrane passes run 23–43 (FSLW…QLIK) and 56–76 (TIFV…CVFL).

Its subcellular location is the cell membrane. This is an uncharacterized protein from Bacillus subtilis (strain 168).